Consider the following 82-residue polypeptide: Antitoxin MazE2 (82 aa).

In terms of assembly, probably forms a complex with cognate toxin MazF2.

Functionally, antitoxin component of a type II toxin-antitoxin (TA) system. Labile antitoxin that binds to cognate MazF2 toxin and counteracts its endoribonuclease activity. The polypeptide is Antitoxin MazE2 (mazE2) (Mycobacterium bovis (strain ATCC BAA-935 / AF2122/97)).